Reading from the N-terminus, the 175-residue chain is Nudix hydrolase 25 (175 aa).

The Nudix hydrolase domain occupies 7–155 (GYRPNVGVCL…KRPTYEEVIK (149 aa)). Mn(2+) contacts are provided by Gly-40, Glu-55, and Glu-59. The Nudix box signature appears at 40-61 (GGIEDGEDPKSAAMRELQEETG).

It belongs to the Nudix hydrolase family. It depends on Mn(2+) as a cofactor.

The enzyme catalyses P(1),P(4)-bis(5'-guanosyl) tetraphosphate + H2O = GMP + GTP + 2 H(+). Its function is as follows. Mediates the hydrolysis of diadenosine 5',5''-P(1)P(4) tetraphosphate (Ap(4)A), a signaling molecule involved in regulation of DNA replication and repair. This is Nudix hydrolase 25 from Arabidopsis thaliana (Mouse-ear cress).